A 315-amino-acid chain; its full sequence is Phosphomutase-like protein 3 (315 aa).

The N-terminal stretch at 1–19 (MQQFLTLGALWTLFNVATT) is a signal peptide. The active-site Tele-phosphohistidine intermediate is the histidine 77. Residues asparagine 88 and asparagine 154 are each glycosylated (N-linked (GlcNAc...) asparagine). The active-site Proton donor/acceptor is the glutamate 173. Residue asparagine 185 is glycosylated (N-linked (GlcNAc...) asparagine). A lipid anchor (GPI-anchor amidated asparagine) is attached at asparagine 286. Positions 287-315 (DAWDTFKDWCPNPPASISGTATSTATGSA) are cleaved as a propeptide — removed in mature form.

It belongs to the phosphoglycerate mutase family.

The protein localises to the cell membrane. This is Phosphomutase-like protein 3 (PGA12) from Candida albicans (strain SC5314 / ATCC MYA-2876) (Yeast).